The sequence spans 506 residues: MLVDTGLGLISELRARLGWAALLQIVPVTVVAYNLLWFIYTSFFSSLRKIPGPFLARISRVWEIKKAATGNIHEIVMDLHRCHGPIVRIGPNRYDFDTMEALKIIYRIGNALPKADYYIPFGLPSSPNLFDVQNPARHSAMKKQVASLYTMTALLSYEAGVDGQTIILKEQLQRFCDQKQVIDLPQFLQYYAFDVIGVITVGKSMGMMETNSDTNGACGALDAMWHYSSMMAFIPHMHAWWLRLSSLLPIDVPIKGLTEYVEQRIIQYRLKAAEFGDDDALKGENNFLAKLILMERQGTVTSTETQQAVGLNIGAGSDTTANALSSILYFLYTNPRTLRRLREELDTHVKEDPIRFQQSQSMPYLQAVIKEALRLHPGVGTQLTRVVPKGGLVIEGQFFPEGAEVGVNGWALYHNKAIFGNDASVFRPERWLETKGNLNIGGSFAFGAGSRSCIGKNISILEMSKAIPQIVRNFDIEINHGDMTWKNECWWFVKPEYKAMIKPRAA.

Heme is bound at residue C453.

This sequence belongs to the cytochrome P450 family. It depends on heme as a cofactor.

Its function is as follows. Can detoxify the phytoalexin pisatin from garden pea. Pisatin is an antimicrobial compound produced by pea in response to infection by plant pathogens. This chain is Pisatin demethylase (PDA6-1), found in Fusarium vanettenii (Neocosmospora pisi).